The sequence spans 170 residues: Putative 4-hydroxy-4-methyl-2-oxoglutarate aldolase (170 aa).

Substrate-binding positions include 85 to 88 (GDMI) and R107. A divalent metal cation is bound at residue D108.

It belongs to the class II aldolase/RraA-like family. In terms of assembly, homotrimer. A divalent metal cation serves as cofactor.

It carries out the reaction 4-hydroxy-4-methyl-2-oxoglutarate = 2 pyruvate. It catalyses the reaction oxaloacetate + H(+) = pyruvate + CO2. Catalyzes the aldol cleavage of 4-hydroxy-4-methyl-2-oxoglutarate (HMG) into 2 molecules of pyruvate. Also contains a secondary oxaloacetate (OAA) decarboxylase activity due to the common pyruvate enolate transition state formed following C-C bond cleavage in the retro-aldol and decarboxylation reactions. The sequence is that of Putative 4-hydroxy-4-methyl-2-oxoglutarate aldolase from Acinetobacter baylyi (strain ATCC 33305 / BD413 / ADP1).